A 712-amino-acid chain; its full sequence is Polyribonucleotide nucleotidyltransferase (712 aa).

Positions 487 and 493 each coordinate Mg(2+). The 60-residue stretch at 554–613 (PRIHTMKISVEKIKDVIGKGGAVIRQLTEETGTTIEIEDDGTIKIAATDGDQAKEAIRRI) folds into the KH domain. In terms of domain architecture, S1 motif spans 623–691 (GVIYTGKVAR…RQGRVRLSMK (69 aa)).

It belongs to the polyribonucleotide nucleotidyltransferase family. Component of the RNA degradosome, which is a multiprotein complex involved in RNA processing and mRNA degradation. Mg(2+) is required as a cofactor.

It localises to the cytoplasm. The enzyme catalyses RNA(n+1) + phosphate = RNA(n) + a ribonucleoside 5'-diphosphate. Functionally, involved in mRNA degradation. Catalyzes the phosphorolysis of single-stranded polyribonucleotides processively in the 3'- to 5'-direction. The polypeptide is Polyribonucleotide nucleotidyltransferase (Vibrio cholerae serotype O1 (strain ATCC 39541 / Classical Ogawa 395 / O395)).